The primary structure comprises 319 residues: Beta-ketoacyl-[acyl-carrier-protein] synthase III (319 aa).

Residues cysteine 113 and histidine 246 contribute to the active site. The tract at residues 247–251 (QANIR) is ACP-binding. Residue asparagine 276 is part of the active site.

It belongs to the thiolase-like superfamily. FabH family. Homodimer.

It is found in the cytoplasm. The catalysed reaction is malonyl-[ACP] + acetyl-CoA + H(+) = 3-oxobutanoyl-[ACP] + CO2 + CoA. Its pathway is lipid metabolism; fatty acid biosynthesis. Functionally, catalyzes the condensation reaction of fatty acid synthesis by the addition to an acyl acceptor of two carbons from malonyl-ACP. Catalyzes the first condensation reaction which initiates fatty acid synthesis and may therefore play a role in governing the total rate of fatty acid production. Possesses both acetoacetyl-ACP synthase and acetyl transacylase activities. Its substrate specificity determines the biosynthesis of branched-chain and/or straight-chain of fatty acids. This chain is Beta-ketoacyl-[acyl-carrier-protein] synthase III, found in Ehrlichia ruminantium (strain Gardel).